The sequence spans 449 residues: Metacaspase-1 (449 aa).

The segment at 1 to 132 (MFPGQGRHTY…YSRPPTNQQS (132 aa)) is disordered. Residues 10–26 (YGGQQQLLQLQQYNYGP) are compositionally biased toward low complexity. Positions 27 to 55 (PQGPPPNGYGPPPGPPPNGYGPPPGPPPQ) are enriched in pro residues. Polar residues predominate over residues 56 to 66 (NSWGYGNPSGT). Low complexity-rich tracts occupy residues 67–91 (QSSNQQRYQGQQSGQQNYNGGYQRP) and 98–112 (QSGNQRGQPGQNGEP). The span at 119 to 132 (GSGQYSRPPTNQQS) shows a compositional bias: polar residues. Residues His232 and Cys293 contribute to the active site.

This sequence belongs to the peptidase C14B family.

Its function is as follows. Involved in cell death (apoptosis). In Lodderomyces elongisporus (strain ATCC 11503 / CBS 2605 / JCM 1781 / NBRC 1676 / NRRL YB-4239) (Yeast), this protein is Metacaspase-1 (MCA1).